Reading from the N-terminus, the 197-residue chain is Imidazoleglycerol-phosphate dehydratase (197 aa).

Belongs to the imidazoleglycerol-phosphate dehydratase family.

Its subcellular location is the cytoplasm. It catalyses the reaction D-erythro-1-(imidazol-4-yl)glycerol 3-phosphate = 3-(imidazol-4-yl)-2-oxopropyl phosphate + H2O. Its pathway is amino-acid biosynthesis; L-histidine biosynthesis; L-histidine from 5-phospho-alpha-D-ribose 1-diphosphate: step 6/9. The polypeptide is Imidazoleglycerol-phosphate dehydratase (Azotobacter vinelandii (strain DJ / ATCC BAA-1303)).